The primary structure comprises 576 residues: NADH-ubiquinone oxidoreductase chain 5 (576 aa).

16 helical membrane passes run 6–26 (ISFY…LKFL), 46–66 (IVMT…VLLI), 88–108 (ILLV…PNLI), 109–129 (SILL…IYFQ), 149–169 (VALL…YIFY), 179–199 (MMII…QIPF), 211–231 (TPVS…YLLI), 240–260 (WWMG…AGLG), 270–289 (IIAL…LSMG), 294–316 (AFFH…GSII), 339–359 (CSCF…AGFY), 363–383 (LILE…LFFF), 423–443 (IFFL…LMFL), 459–479 (LFVC…SLFF), 492–512 (FAGS…NYPL), and 556–576 (IYLL…VLVN).

The protein belongs to the complex I subunit 5 family.

It is found in the mitochondrion inner membrane. The enzyme catalyses a ubiquinone + NADH + 5 H(+)(in) = a ubiquinol + NAD(+) + 4 H(+)(out). Functionally, core subunit of the mitochondrial membrane respiratory chain NADH dehydrogenase (Complex I) that is believed to belong to the minimal assembly required for catalysis. Complex I functions in the transfer of electrons from NADH to the respiratory chain. The immediate electron acceptor for the enzyme is believed to be ubiquinone. The protein is NADH-ubiquinone oxidoreductase chain 5 (ND5) of Anopheles quadrimaculatus (Common malaria mosquito).